A 762-amino-acid polypeptide reads, in one-letter code: Protein PHTF1 (762 aa).

Residues arginine 6–isoleucine 150 form the PHTF domain. 3 consecutive transmembrane segments (helical) span residues glycine 77 to leucine 97, isoleucine 99 to methionine 119, and proline 121 to valine 141. A disordered region spans residues arginine 152–lysine 184. N-linked (GlcNAc...) asparagine glycans are attached at residues asparagine 179 and asparagine 180. A phosphoserine mark is found at serine 272, serine 276, serine 277, serine 334, and serine 336. Disordered regions lie at residues serine 344 to aspartate 380 and arginine 393 to aspartate 415. The span at serine 348–serine 361 shows a compositional bias: low complexity. Asparagine 363 carries an N-linked (GlcNAc...) asparagine glycan. Over residues serine 365 to serine 376 the composition is skewed to basic and acidic residues. Asparagine 431 carries an N-linked (GlcNAc...) asparagine glycan. 4 consecutive transmembrane segments (helical) span residues glycine 473–leucine 493, glutamate 512–isoleucine 532, valine 611–valine 631, and tryptophan 645–glycine 665. 2 N-linked (GlcNAc...) asparagine glycosylation sites follow: asparagine 674 and asparagine 733. The helical transmembrane segment at valine 737–leucine 757 threads the bilayer.

Interacts with FEM1B. In terms of tissue distribution, widely expressed with highest levels in testis.

It is found in the endoplasmic reticulum membrane. The protein localises to the golgi apparatus. It localises to the cis-Golgi network membrane. In Homo sapiens (Human), this protein is Protein PHTF1.